Consider the following 160-residue polypeptide: Cytochrome b6-f complex subunit 4 (160 aa).

The next 3 membrane-spanning stretches (helical) occupy residues 36–56 (LLYI…GLAV), 95–115 (LLGI…PFIE), and 131–151 (SVFL…CLPI).

The protein belongs to the cytochrome b family. PetD subfamily. As to quaternary structure, the 4 large subunits of the cytochrome b6-f complex are cytochrome b6, subunit IV (17 kDa polypeptide, PetD), cytochrome f and the Rieske protein, while the 4 small subunits are PetG, PetL, PetM and PetN. The complex functions as a dimer.

Its subcellular location is the cellular thylakoid membrane. Its function is as follows. Component of the cytochrome b6-f complex, which mediates electron transfer between photosystem II (PSII) and photosystem I (PSI), cyclic electron flow around PSI, and state transitions. The sequence is that of Cytochrome b6-f complex subunit 4 from Prochlorococcus marinus subsp. pastoris (strain CCMP1986 / NIES-2087 / MED4).